A 494-amino-acid chain; its full sequence is Cytochrome P450 2A5 (494 aa).

Ser-131 is modified (phosphoserine). Residue Lys-379 is modified to N6-acetyllysine. Cys-439 lines the heme pocket.

This sequence belongs to the cytochrome P450 family. Requires heme as cofactor. Liver, with a strong circadian rhythmicity. Circadian expression is regulated by DBP.

Its subcellular location is the endoplasmic reticulum membrane. The protein resides in the microsome membrane. It carries out the reaction an organic molecule + reduced [NADPH--hemoprotein reductase] + O2 = an alcohol + oxidized [NADPH--hemoprotein reductase] + H2O + H(+). Exhibits a high coumarin 7-hydroxylase activity. This is Cytochrome P450 2A5 (Cyp2a5) from Mus musculus (Mouse).